The sequence spans 911 residues: Protein translocase subunit SecA (911 aa).

Residues Q86, 104 to 108, and D512 each bind ATP; that span reads GEGKT. A disordered region spans residues 869 to 888; that stretch reads ALADDGQPQGAQPVRNVLPK. Residues C895, C897, C906, and H907 each contribute to the Zn(2+) site.

The protein belongs to the SecA family. As to quaternary structure, monomer and homodimer. Part of the essential Sec protein translocation apparatus which comprises SecA, SecYEG and auxiliary proteins SecDF-YajC and YidC. Requires Zn(2+) as cofactor.

The protein resides in the cell inner membrane. It is found in the cytoplasm. It catalyses the reaction ATP + H2O + cellular proteinSide 1 = ADP + phosphate + cellular proteinSide 2.. Its function is as follows. Part of the Sec protein translocase complex. Interacts with the SecYEG preprotein conducting channel. Has a central role in coupling the hydrolysis of ATP to the transfer of proteins into and across the cell membrane, serving both as a receptor for the preprotein-SecB complex and as an ATP-driven molecular motor driving the stepwise translocation of polypeptide chains across the membrane. In Bordetella parapertussis (strain 12822 / ATCC BAA-587 / NCTC 13253), this protein is Protein translocase subunit SecA.